The primary structure comprises 476 residues: Probable isoprenylcysteine alpha-carbonyl methylesterase ICMEL1 (476 aa).

The segment covering 92-104 has biased composition (polar residues); it reads NCLSAFSDDTNGT. Residues 92-116 are disordered; the sequence is NCLSAFSDDTNGTADGGNNSGDRQT. The next 2 helical transmembrane spans lie at 153-173 and 208-228; these read FMAL…VGYY and VVAF…GSLL. Substrate-binding positions include 214–216 and 285–287; these read GGA and QSA. Active-site residues include Ser-286, Asp-388, and His-420.

This sequence belongs to the AB hydrolase superfamily. Isoprenylcysteine methylesterase family. As to expression, expressed in roots, rosette and cauline leaves, stems, flowers and siliques.

Its subcellular location is the endoplasmic reticulum membrane. The protein resides in the golgi apparatus membrane. The enzyme catalyses [protein]-C-terminal S-[(2E,6E)-farnesyl]-L-cysteine methyl ester + H2O = [protein]-C-terminal S-[(2E,6E)-farnesyl]-L-cysteine + methanol + H(+). Functionally, catalyzes the demethylation of isoprenylcysteine methylesters. May be involved in the regulation of ABA signaling. This is Probable isoprenylcysteine alpha-carbonyl methylesterase ICMEL1 from Arabidopsis thaliana (Mouse-ear cress).